Reading from the N-terminus, the 457-residue chain is MSAGKIVQIIGAVIDVEFPQDAVPKVYDALKVESGLTLEVQQQLGGGVVRCIALGTSDGLKRGLKVENTNNPIQVPVGTKTLGRIVNVLGEPIDEQGAIGEEERWAIHRSAPSYEEQSNSTELLETGIKVIDLICPFAKGGKVGLFGGAGVGKTVNMMELIRNIAIEHSGYSVFAGVGERTREGNDFYHEMKDSNVLDKVSLVYGQMNEPPGNRLRVALTGLTMAEKFRDEGRDVLFFVDNIYRYTLAGTEVSALLGRMPSAVGYQPTLAEEMGVLQERITSTKTGSITSVQAVYVPADDLTDPSPATTFAHLDSTVVLSRQIASLGIYPAVDPLDSTSRQLDPLVVGQEHYDVARGVQGILQRYKELKDIIAILGMDELSEEDKLVVARARKIERFLSQPFFVAEVFTGSPGKYVTLKDTIRGFKGILEGEYDHIPEQAFYMVGSIDEVLEKAKNM.

147-154 lines the ATP pocket; it reads GGAGVGKT.

This sequence belongs to the ATPase alpha/beta chains family. F-type ATPases have 2 components, CF(1) - the catalytic core - and CF(0) - the membrane proton channel. CF(1) has five subunits: alpha(3), beta(3), gamma(1), delta(1), epsilon(1). CF(0) has three main subunits: a(1), b(2) and c(9-12). The alpha and beta chains form an alternating ring which encloses part of the gamma chain. CF(1) is attached to CF(0) by a central stalk formed by the gamma and epsilon chains, while a peripheral stalk is formed by the delta and b chains.

It localises to the cell inner membrane. It carries out the reaction ATP + H2O + 4 H(+)(in) = ADP + phosphate + 5 H(+)(out). Produces ATP from ADP in the presence of a proton gradient across the membrane. The catalytic sites are hosted primarily by the beta subunits. The chain is ATP synthase subunit beta from Haemophilus influenzae (strain PittGG).